Reading from the N-terminus, the 179-residue chain is UPF0398 protein Bsph_0756 (179 aa).

It belongs to the UPF0398 family.

This is UPF0398 protein Bsph_0756 from Lysinibacillus sphaericus (strain C3-41).